A 254-amino-acid polypeptide reads, in one-letter code: RNA polymerase sigma factor SigI8 (254 aa).

The Polymerase core binding signature appears at 61-74; sequence DEYSIALIAFNEAI. Residues 209 to 228 constitute a DNA-binding region (H-T-H motif); the sequence is YKELTERFNLCRRTLEKNRK.

The protein belongs to the sigma-70 factor family. SigI subfamily. In terms of assembly, interacts with RsgI8.

It is found in the cytoplasm. With respect to regulation, negatively regulated by the anti-sigma-I factor RsgI8. Functionally, sigma factors are initiation factors that promote the attachment of RNA polymerase to specific initiation sites and are then released. This chain is RNA polymerase sigma factor SigI8, found in Acetivibrio thermocellus (strain ATCC 27405 / DSM 1237 / JCM 9322 / NBRC 103400 / NCIMB 10682 / NRRL B-4536 / VPI 7372) (Clostridium thermocellum).